Consider the following 421-residue polypeptide: Histidine--tRNA ligase (421 aa).

The protein belongs to the class-II aminoacyl-tRNA synthetase family.

Its subcellular location is the cytoplasm. It carries out the reaction tRNA(His) + L-histidine + ATP = L-histidyl-tRNA(His) + AMP + diphosphate + H(+). The chain is Histidine--tRNA ligase from Pyrobaculum calidifontis (strain DSM 21063 / JCM 11548 / VA1).